Reading from the N-terminus, the 329-residue chain is Peroxidase 5 (329 aa).

An N-terminal signal peptide occupies residues methionine 1 to alanine 26. Glutamine 27 carries the pyrrolidone carboxylic acid modification. 4 disulfides stabilise this stretch: cysteine 37-cysteine 117, cysteine 70-cysteine 75, cysteine 123-cysteine 324, and cysteine 202-cysteine 234. Catalysis depends on histidine 68, which acts as the Proton acceptor. Ca(2+) contacts are provided by aspartate 69, valine 72, glycine 74, aspartate 76, and serine 78. Proline 165 contributes to the substrate binding site. Residue histidine 195 coordinates heme b. Residue threonine 196 participates in Ca(2+) binding. N-linked (GlcNAc...) asparagine glycosylation is present at asparagine 213. The Ca(2+) site is built by serine 251 and aspartate 256.

It belongs to the peroxidase family. Classical plant (class III) peroxidase subfamily. The cofactor is heme b. Ca(2+) is required as a cofactor.

The protein localises to the secreted. It catalyses the reaction 2 a phenolic donor + H2O2 = 2 a phenolic radical donor + 2 H2O. Removal of H(2)O(2), oxidation of toxic reductants, biosynthesis and degradation of lignin, suberization, auxin catabolism, response to environmental stresses such as wounding, pathogen attack and oxidative stress. These functions might be dependent on each isozyme/isoform in each plant tissue. The chain is Peroxidase 5 from Vitis vinifera (Grape).